Here is a 507-residue protein sequence, read N- to C-terminus: ATP-dependent RNA helicase DDX47 (507 aa).

Residues 1–31 show a composition bias toward acidic residues; it reads MSETSEDEQTQLQTSDEEEDLGSEEEQEDED. The tract at residues 1 to 58 is disordered; that stretch reads MSETSEDEQTQLQTSDEEEDLGSEEEQEDEDNNHKEGDSEAALSGEDDKGSEDDAAEE. Residues 61–89 carry the Q motif motif; that stretch reads LTWKDLGLNEALCQACDELKWKAPSKIQR. The Helicase ATP-binding domain maps to 92 to 263; the sequence is IPVALQGKDV…RASLKDPVKV (172 aa). ATP is bound at residue 105–112; that stretch reads AETGSGKT. The DEAD box signature appears at 211 to 214; that stretch reads DEAD. The 145-residue stretch at 290–434 folds into the Helicase C-terminal domain; it reads YLVHILNELA…LYKCEEDEVM (145 aa). Residues 426 to 453 are a coiled coil; the sequence is YKCEEDEVMALQERVAEAQRTAKLELKD. Basic and acidic residues predominate over residues 451-471; the sequence is LKDLEDTRGGHKRGGDTHDDS. Positions 451-507 are disordered; it reads LKDLEDTRGGHKRGGDTHDDSENFTGARKRMKPMGGTGGGGRKSFGKKNWSKGKQKR. Over residues 494–507 the composition is skewed to basic residues; that stretch reads SFGKKNWSKGKQKR.

It belongs to the DEAD box helicase family. DDX47/RRP3 subfamily.

The protein localises to the nucleus. Its subcellular location is the nucleolus. The enzyme catalyses ATP + H2O = ADP + phosphate + H(+). Functionally, part of a translational control module, also containing ath/DHX33 and ais/DDX52, which coordinates germline stem cell differentiation with ribosome biogenesis during oogenesis. This module allows for coregulation of ribosomal proteins and non1/GTPBP4, a p53 repressor, preventing p53 stabilization, cell cycle arrest and loss of stem cell differentiation. With atos, adjusts transcription and translation of a subset of OXPHOS genes in macrophages to increase mitochondrial bioenergetics and allow tissue invasion. The sequence is that of ATP-dependent RNA helicase DDX47 from Drosophila melanogaster (Fruit fly).